The primary structure comprises 203 residues: Ras-like protein family member 10A (203 aa).

Residues 1 to 203 (MGGSLRVAVL…ALHPARCSLM (203 aa)) are small GTPase-like. A GTP-binding site is contributed by 11 to 18 (GAPGVGKT). The Effector region motif lies at 33–42 (HRPTDGPRLY). Residues 59-62 (DGDV) and 129-132 (NKRD) contribute to the GTP site. Residue C200 is modified to Cysteine methyl ester. Residue C200 is the site of S-farnesyl cysteine attachment. Positions 201-203 (SLM) are cleaved as a propeptide — removed in mature form.

The protein belongs to the small GTPase superfamily. Ras family. In terms of processing, isoprenylation is essential for nucleolar localization, and the proliferation-inhibiting activity of RASL10A. In terms of tissue distribution, expression appears to be strictly limited to the central nervous system.

It localises to the cell membrane. Its subcellular location is the nucleus. The protein resides in the nucleolus. It carries out the reaction GTP + H2O = GDP + phosphate + H(+). Potent inhibitor of cellular proliferation. This is Ras-like protein family member 10A (RASL10A) from Homo sapiens (Human).